Consider the following 164-residue polypeptide: Protein-export protein SecB (164 aa).

The span at 1–12 (MPDKDEITHDAQ) shows a compositional bias: basic and acidic residues. The disordered stretch occupies residues 1–22 (MPDKDEITHDAQSENEESLPLA).

It belongs to the SecB family. Homotetramer, a dimer of dimers. One homotetramer interacts with 1 SecA dimer.

It localises to the cytoplasm. In terms of biological role, one of the proteins required for the normal export of preproteins out of the cell cytoplasm. It is a molecular chaperone that binds to a subset of precursor proteins, maintaining them in a translocation-competent state. It also specifically binds to its receptor SecA. This is Protein-export protein SecB from Neorickettsia sennetsu (strain ATCC VR-367 / Miyayama) (Ehrlichia sennetsu).